The following is a 132-amino-acid chain: Small ribosomal subunit protein uS8 (132 aa).

Belongs to the universal ribosomal protein uS8 family. In terms of assembly, part of the 30S ribosomal subunit. Contacts proteins S5 and S12.

Functionally, one of the primary rRNA binding proteins, it binds directly to 16S rRNA central domain where it helps coordinate assembly of the platform of the 30S subunit. In Desulforamulus reducens (strain ATCC BAA-1160 / DSM 100696 / MI-1) (Desulfotomaculum reducens), this protein is Small ribosomal subunit protein uS8.